We begin with the raw amino-acid sequence, 363 residues long: Holliday junction branch migration complex subunit RuvB (363 aa).

A disordered region spans residues 1 to 23 (MHKDEDQRLLGPAPLPNDPDRSL). Residues 1–184 (MHKDEDQRLL…FGIPIRLNFY (184 aa)) form a large ATPase domain (RuvB-L) region. ATP contacts are provided by residues L23, R24, G65, K68, T69, T70, 131–133 (EDY), R174, Y184, and R221. Residue T69 participates in Mg(2+) binding. Residues 185 to 255 (TIEELEYIVQ…IADEALSRLE (71 aa)) are small ATPAse domain (RuvB-S). Residues 258–363 (HLGLDPLDRR…QTTLWDGEDD (106 aa)) are head domain (RuvB-H). Residues R294, R313, and R318 each coordinate DNA.

It belongs to the RuvB family. Homohexamer. Forms an RuvA(8)-RuvB(12)-Holliday junction (HJ) complex. HJ DNA is sandwiched between 2 RuvA tetramers; dsDNA enters through RuvA and exits via RuvB. An RuvB hexamer assembles on each DNA strand where it exits the tetramer. Each RuvB hexamer is contacted by two RuvA subunits (via domain III) on 2 adjacent RuvB subunits; this complex drives branch migration. In the full resolvosome a probable DNA-RuvA(4)-RuvB(12)-RuvC(2) complex forms which resolves the HJ.

It is found in the cytoplasm. It carries out the reaction ATP + H2O = ADP + phosphate + H(+). In terms of biological role, the RuvA-RuvB-RuvC complex processes Holliday junction (HJ) DNA during genetic recombination and DNA repair, while the RuvA-RuvB complex plays an important role in the rescue of blocked DNA replication forks via replication fork reversal (RFR). RuvA specifically binds to HJ cruciform DNA, conferring on it an open structure. The RuvB hexamer acts as an ATP-dependent pump, pulling dsDNA into and through the RuvAB complex. RuvB forms 2 homohexamers on either side of HJ DNA bound by 1 or 2 RuvA tetramers; 4 subunits per hexamer contact DNA at a time. Coordinated motions by a converter formed by DNA-disengaged RuvB subunits stimulates ATP hydrolysis and nucleotide exchange. Immobilization of the converter enables RuvB to convert the ATP-contained energy into a lever motion, pulling 2 nucleotides of DNA out of the RuvA tetramer per ATP hydrolyzed, thus driving DNA branch migration. The RuvB motors rotate together with the DNA substrate, which together with the progressing nucleotide cycle form the mechanistic basis for DNA recombination by continuous HJ branch migration. Branch migration allows RuvC to scan DNA until it finds its consensus sequence, where it cleaves and resolves cruciform DNA. In Bartonella tribocorum (strain CIP 105476 / IBS 506), this protein is Holliday junction branch migration complex subunit RuvB.